Reading from the N-terminus, the 176-residue chain is Disulfide bond formation protein B (176 aa).

Topologically, residues 1–14 (MLRFLNQCSHGRGA) are cytoplasmic. The chain crosses the membrane as a helical span at residues 15-31 (WLLMAFTALALELTALW). Over 32 to 49 (FQHVMLLKPCVLCIYERC) the chain is Periplasmic. The cysteines at positions 41 and 44 are disulfide-linked. The chain crosses the membrane as a helical span at residues 50–65 (ALFGVLGAALIGAIAP). Residues 66–71 (KTPLRY) are Cytoplasmic-facing. The chain crosses the membrane as a helical span at residues 72 to 89 (VAMVIWLYSAFRGVQLTY). Over 90–144 (EHTMLQLYPSPFATCDFMARFPEWLPLDKWVPQVFVASGDCAERQWEFLGLEMPQ) the chain is Periplasmic. Cys104 and Cys130 are disulfide-bonded. A helical membrane pass occupies residues 145–163 (WLLGIFIAYLIVAVLVVIS). Topologically, residues 164–176 (QPFKAKKRDLFGR) are cytoplasmic.

This sequence belongs to the DsbB family.

It localises to the cell inner membrane. Required for disulfide bond formation in some periplasmic proteins. Acts by oxidizing the DsbA protein. In Escherichia coli O6:K15:H31 (strain 536 / UPEC), this protein is Disulfide bond formation protein B.